The chain runs to 206 residues: Large ribosomal subunit protein uL22m (206 aa).

Residues 1 to 40 constitute a mitochondrion transit peptide; the sequence is MAAAVLGQLGALWIHNLRSRGRLAWGVLPQSYVHTSASLD.

Belongs to the universal ribosomal protein uL22 family. In terms of assembly, component of the mitochondrial ribosome large subunit (39S) which comprises a 16S rRNA and about 50 distinct proteins.

The protein localises to the mitochondrion. This is Large ribosomal subunit protein uL22m (MRPL22) from Pongo abelii (Sumatran orangutan).